The primary structure comprises 413 residues: Putative zinc finger protein B0310.2 (413 aa).

Disordered stretches follow at residues 130–151 (PIFS…KRSL) and 259–290 (VESD…TGPM). Positions 270–281 (PSPSTGDITENE) are enriched in polar residues. 2 consecutive C2H2-type zinc fingers follow at residues 306–330 (FICM…MFIH) and 336–358 (HTCP…KKTH).

The protein resides in the nucleus. This is Putative zinc finger protein B0310.2 from Caenorhabditis elegans.